The sequence spans 505 residues: MIQVLLVIICLAAFPYQGTSIILESGNVNDYEVVYPRKVTALPKGAVQPKYEDAMQYELKVNGEPVVLHLPKNKALPSKDYIETHYSPDGRKITTNPPVEDHCYYHGRIQNDADSTASISACNGLKGHFKLQGETYLIEPLKLSNSEAHAVYKYEDVEKEDEAPKMCGVTQNWESYEPIKYEDVEKEDEAPKMCGVTQNWESYEPIKKASQSNLTPAHQRYIELVIVADHGMFTKYNGDSDKIREWVRQMVNTVDEIYSYMYIDVALAGLQIWSNEDLINVQPAAPHTLDSFGKWRERDLLHRIHHDNAMLLTAIDFDGPTIGLAYVGTMSNPKGSTGVVQDHSTINFRVAVTMAHEIGHNLGIHHDTGSCSCGGYSCIMSPVISHEPSKYFSDCSYTQCWDFIMNQKPQCILNKPLRTDTVSTPVSGNELLEAGEECDCGSPGNPCCDAATCKLRQGAQCAEGLCCDQCRFMKEGTICRRGRGDDLDDYCNGISAGCPRNPFHA.

The N-terminal stretch at 1 to 20 is a signal peptide; that stretch reads MIQVLLVIICLAAFPYQGTS. Residues 21 to 214 constitute a propeptide that is removed on maturation; that stretch reads IILESGNVND…PIKKASQSNL (194 aa). 2 consecutive repeat copies span residues 153-179 and 180-206. Residues 220 to 416 enclose the Peptidase M12B domain; the sequence is RYIELVIVAD…QKPQCILNKP (197 aa). Ca(2+) is bound by residues Glu-223 and Asp-307. His-356 lines the Zn(2+) pocket. Glu-357 is an active-site residue. 2 residues coordinate Zn(2+): His-360 and His-366. Cystine bridges form between Cys-371-Cys-395 and Cys-373-Cys-378. Residues Cys-411 and Asn-414 each contribute to the Ca(2+) site. Residues 417–432 constitute a propeptide that is removed on maturation; sequence LRTDTVSTPVSGNELL. The region spanning 424 to 505 is the Disintegrin domain; the sequence is TPVSGNELLE…AGCPRNPFHA (82 aa). Cystine bridges form between Cys-438–Cys-453, Cys-440–Cys-448, Cys-447–Cys-470, Cys-461–Cys-467, Cys-466–Cys-491, and Cys-479–Cys-498. Residues 483-485 carry the Cell attachment site motif; the sequence is RGD.

Belongs to the venom metalloproteinase (M12B) family. P-II subfamily. P-IIa sub-subfamily. As to quaternary structure, monomer. The cofactor is Zn(2+). In terms of tissue distribution, expressed by the venom gland.

Its subcellular location is the secreted. In terms of biological role, impairs hemostasis in the envenomed animal. Its function is as follows. Inhibits platelet aggregation induced by ADP, thrombin, platelet-activating factor and collagen. Acts by inhibiting fibrinogen interaction with platelet receptors GPIIb/GPIIIa (ITGA2B/ITGB3). The protein is Zinc metalloproteinase/disintegrin of Gloydius brevicauda (Korean slamosa snake).